A 477-amino-acid chain; its full sequence is Cysteine--tRNA ligase (477 aa).

A Zn(2+)-binding site is contributed by Cys-29. The short motif at 31-41 (PTVQASPHIGH) is the 'HIGH' region element. Zn(2+) contacts are provided by Cys-219, His-244, and Glu-248. A 'KMSKS' region motif is present at residues 275–279 (KMSKS). An ATP-binding site is contributed by Lys-278.

Belongs to the class-I aminoacyl-tRNA synthetase family. Monomer. It depends on Zn(2+) as a cofactor.

Its subcellular location is the cytoplasm. It catalyses the reaction tRNA(Cys) + L-cysteine + ATP = L-cysteinyl-tRNA(Cys) + AMP + diphosphate. The chain is Cysteine--tRNA ligase from Leifsonia xyli subsp. xyli (strain CTCB07).